The primary structure comprises 329 residues: DNA-directed RNA polymerase subunit alpha (329 aa).

The alpha N-terminal domain (alpha-NTD) stretch occupies residues 1 to 234 (MSGSVTEFLK…EQLDAFVELR (234 aa)). The segment at 248–329 (FDPILLRPVD…WPPESIAEKD (82 aa)) is alpha C-terminal domain (alpha-CTD).

This sequence belongs to the RNA polymerase alpha chain family. As to quaternary structure, homodimer. The RNAP catalytic core consists of 2 alpha, 1 beta, 1 beta' and 1 omega subunit. When a sigma factor is associated with the core the holoenzyme is formed, which can initiate transcription.

The catalysed reaction is RNA(n) + a ribonucleoside 5'-triphosphate = RNA(n+1) + diphosphate. In terms of biological role, DNA-dependent RNA polymerase catalyzes the transcription of DNA into RNA using the four ribonucleoside triphosphates as substrates. The sequence is that of DNA-directed RNA polymerase subunit alpha from Pseudoalteromonas atlantica (strain T6c / ATCC BAA-1087).